The following is a 170-amino-acid chain: Type II secretion system protein H (170 aa).

A propeptide spans 1-5 (MRQRG) (leader sequence). Phe-6 carries the post-translational modification N-methylphenylalanine. The helical transmembrane segment at 6 to 29 (FTLLEMMLILLLMGVSAGMVLLAF) threads the bilayer.

The protein belongs to the GSP H family. In terms of assembly, type II secretion is composed of four main components: the outer membrane complex, the inner membrane complex, the cytoplasmic secretion ATPase and the periplasm-spanning pseudopilus. Interacts with core component PulG. In terms of processing, cleaved by prepilin peptidase. Methylated by prepilin peptidase at the amino group of the N-terminal phenylalanine once the leader sequence is cleaved by prepilin peptidase.

The protein localises to the cell inner membrane. Component of the type II secretion system required for the energy-dependent secretion of extracellular factors such as proteases and toxins from the periplasm. Part of the pseudopilus tip complex that is critical for the recognition and binding of secretion substrates. This is Type II secretion system protein H (pulH) from Klebsiella pneumoniae.